Reading from the N-terminus, the 517-residue chain is Ammonium transporter 3 (517 aa).

Residues 1-32 (MLNEPNALLRRDANSTIATVTELFPNEYSNAD) lie on the Extracellular side of the membrane. A helical membrane pass occupies residues 33–53 (IAYVLLSTVVVFTVTPGIALY). At 54-69 (YAGMVRKNSALSILTQ) the chain is on the cytoplasmic side. The helical transmembrane segment at 70–90 (SFLVTAVVFIQWYLFGYSLAC) threads the bilayer. Topologically, residues 91-118 (SSGSSFYGTLWQGGMNHLWLEPYIPGST) are extracellular. Residues 119 to 139 (IPAIVYFPFGGLFAVATAQLF) form a helical membrane-spanning segment. Residues 140–148 (AGAMAERGR) lie on the Cytoplasmic side of the membrane. The helical transmembrane segment at 149–169 (LIPSLVISFLYITLVYCPQAY) threads the bilayer. Over 170–180 (WTWAPNGWLYT) the chain is Extracellular. A helical transmembrane segment spans residues 181–201 (LGALDFAGGGPVHISSGFAAL). Residues 202–272 (AYSLCLGRRI…AHNPPHDAGM (71 aa)) lie on the Cytoplasmic side of the membrane. Residues 273–293 (VYIGVVLIWFAWLCFNSGTLL) form a helical membrane-spanning segment. At 294–299 (TVNIRT) the chain is on the extracellular side. Residues 300 to 320 (AYIMTNTLISSSFGALTWAII) form a helical membrane-spanning segment. Over 321 to 327 (DYIRYRK) the chain is Cytoplasmic. The chain crosses the membrane as a helical span at residues 328-348 (FSTIGICEGAIAGLVGITPAC). A topological domain (extracellular) is located at residue glycine 349. A helical membrane pass occupies residues 350–370 (FVFPWGAAAGGIVPALVCNFL). The Cytoplasmic portion of the chain corresponds to 371–384 (HDLNEWIGVDETLR). Residues 385–405 (VFNLHGIGGIVGSIVLGVVAH) traverse the membrane as a helical segment. Residues 406 to 432 (PDVAASDGATVIDGGWAVHHWKQMGYQ) are Extracellular-facing. A helical transmembrane segment spans residues 433-453 (FAGFTSVAAWSFVITAIICLL). Topologically, residues 454 to 517 (VDLVPGLHIR…NIKQEKQDEF (64 aa)) are cytoplasmic.

This sequence belongs to the ammonia transporter channel (TC 1.A.11.2) family.

The protein localises to the membrane. In terms of biological role, transporter for ammonium to use as a nitrogen source. The polypeptide is Ammonium transporter 3 (amt3) (Schizosaccharomyces pombe (strain 972 / ATCC 24843) (Fission yeast)).